The following is a 78-amino-acid chain: UPF0270 protein IL0325 (78 aa).

This sequence belongs to the UPF0270 family.

The sequence is that of UPF0270 protein IL0325 from Idiomarina loihiensis (strain ATCC BAA-735 / DSM 15497 / L2-TR).